Consider the following 422-residue polypeptide: L-threonine dehydratase biosynthetic IlvA (422 aa).

K56 carries the post-translational modification N6-(pyridoxal phosphate)lysine. Pyridoxal 5'-phosphate is bound by residues N83, 189–193 (GGGGL), and S315. The 75-residue stretch at 339-413 (HYFILNFPQR…FDPSNIYINE (75 aa)) folds into the ACT-like domain.

Belongs to the serine/threonine dehydratase family. In terms of assembly, homotetramer. Pyridoxal 5'-phosphate serves as cofactor.

The catalysed reaction is L-threonine = 2-oxobutanoate + NH4(+). Its pathway is amino-acid biosynthesis; L-isoleucine biosynthesis; 2-oxobutanoate from L-threonine: step 1/1. Functionally, catalyzes the anaerobic formation of alpha-ketobutyrate and ammonia from threonine in a two-step reaction. The first step involved a dehydration of threonine and a production of enamine intermediates (aminocrotonate), which tautomerizes to its imine form (iminobutyrate). Both intermediates are unstable and short-lived. The second step is the nonenzymatic hydrolysis of the enamine/imine intermediates to form 2-ketobutyrate and free ammonia. In the low water environment of the cell, the second step is accelerated by RidA. The protein is L-threonine dehydratase biosynthetic IlvA (ilvA) of Staphylococcus aureus (strain MSSA476).